Reading from the N-terminus, the 189-residue chain is Glycerol-3-phosphate acyltransferase (189 aa).

The next 5 membrane-spanning stretches (helical) occupy residues 1 to 21 (MFWLLAIFAYLLGSLSFAILL), 51 to 71 (LAVLTLLGDLCKGLAPVLIAH), 77 to 97 (LQQQAWVGLYAVLGHLFPLYF), 111 to 131 (MLLGLYPPAALLAIAAWALTF), and 151 to 171 (LLAWQEPEALLPMSVLTLLIV).

Belongs to the PlsY family. As to quaternary structure, probably interacts with PlsX.

It is found in the cell inner membrane. It carries out the reaction an acyl phosphate + sn-glycerol 3-phosphate = a 1-acyl-sn-glycero-3-phosphate + phosphate. It participates in lipid metabolism; phospholipid metabolism. In terms of biological role, catalyzes the transfer of an acyl group from acyl-phosphate (acyl-PO(4)) to glycerol-3-phosphate (G3P) to form lysophosphatidic acid (LPA). This enzyme utilizes acyl-phosphate as fatty acyl donor, but not acyl-CoA or acyl-ACP. This chain is Glycerol-3-phosphate acyltransferase, found in Pseudomonas fluorescens (strain ATCC BAA-477 / NRRL B-23932 / Pf-5).